We begin with the raw amino-acid sequence, 342 residues long: Prostasin (342 aa).

A signal peptide spans 1–29 (MAPRVGLGLGQLEAVTILLLLGLLQSGIR). Positions 30 to 32 (ADG) are cleaved as a propeptide — activation peptide. 2 disulfides stabilise this stretch: Cys37-Cys154 and Cys70-Cys86. Residues 45-286 (ITGGGSAKPG…YASWIHHHVA (242 aa)) form the Peptidase S1 domain. Residue His85 is the Charge relay system of the active site. The N-linked (GlcNAc...) asparagine glycan is linked to Asn110. Asp134 serves as the catalytic Charge relay system. An N-linked (GlcNAc...) asparagine glycan is attached at Asn159. 3 cysteine pairs are disulfide-bonded: Cys168–Cys244, Cys201–Cys223, and Cys234–Cys262. Ser238 acts as the Charge relay system in catalysis. Residues 320 to 340 (LLRPVLFLPLGLTLGLLSLWL) traverse the membrane as a helical segment. Residues 323 to 342 (PVLFLPLGLTLGLLSLWLEH) constitute a propeptide that is removed on maturation.

Belongs to the peptidase S1 family. In terms of assembly, heterodimer of two chains, light and heavy, held by a disulfide bond.

It localises to the cell membrane. Its subcellular location is the secreted. It is found in the extracellular space. Functionally, possesses a trypsin-like cleavage specificity with a preference for poly-basic substrates. Stimulates epithelial sodium channel (ENaC) activity through activating cleavage of the gamma subunits (SCNN1G). The sequence is that of Prostasin (Prss8) from Mus musculus (Mouse).